We begin with the raw amino-acid sequence, 422 residues long: UDP-N-acetylglucosamine 1-carboxyvinyltransferase 2 (422 aa).

K22 to N23 provides a ligand contact to phosphoenolpyruvate. R93 serves as a coordination point for UDP-N-acetyl-alpha-D-glucosamine. The Proton donor role is filled by C117. The residue at position 117 (C117) is a 2-(S-cysteinyl)pyruvic acid O-phosphothioketal. Residues R122–L126, D308, and I330 each bind UDP-N-acetyl-alpha-D-glucosamine.

Belongs to the EPSP synthase family. MurA subfamily.

It localises to the cytoplasm. The catalysed reaction is phosphoenolpyruvate + UDP-N-acetyl-alpha-D-glucosamine = UDP-N-acetyl-3-O-(1-carboxyvinyl)-alpha-D-glucosamine + phosphate. It functions in the pathway cell wall biogenesis; peptidoglycan biosynthesis. Functionally, cell wall formation. Adds enolpyruvyl to UDP-N-acetylglucosamine. This Legionella pneumophila (strain Lens) protein is UDP-N-acetylglucosamine 1-carboxyvinyltransferase 2.